The following is a 2057-amino-acid chain: Myosin heavy chain, non-muscle (2057 aa).

The Myosin N-terminal SH3-like domain occupies 78-128 (HRSVLVWVPHENQGFVAASIKREHGDEVEVELAETGKRVMILRDDIQKMNP). The region spanning 132–867 (DKVEDMAELT…VLAHLEEERD (736 aa)) is the Myosin motor domain. Residue 225–232 (GESGAGKT) coordinates ATP. The tract at residues 250-260 (PKGSGAVPHPA) is 25 kDa/50 kDa junction. The 50 kDa/20 kDa junction stretch occupies residues 722 to 734 (DTQFGARTRKGMF). Residues 745 to 767 (LAKLMDTLRNTNPNFVRCIIPNH) are actin-binding. The interval 782–798 (QLRCNGVLEGIRICRQG) is reactive sulfhydryl/actin-binding. The IQ domain maps to 870–899 (ISDLIVNFQAFCRGFLARRNYQKRLQQLNA). A coiled-coil region spans residues 926-2016 (KPLLEVTKQE…SLKTKLRRTG (1091 aa)). Disordered stretches follow at residues 1124 to 1144 (EERLHKDQQQRQESDRSKRKI), 1782 to 1802 (SSERARRAAETERDELAEEIA), and 2008 to 2057 (LKTK…DSAN). The segment at 1343–2010 (SQIAELQVKL…MNREINSLKT (668 aa)) is alpha-helical tailpiece (LMM). Residues 1343–2057 (SQIAELQVKL…ESLDGEDSAN (715 aa)) are light meromyosin (LMM). Basic and acidic residues predominate over residues 1782-1792 (SSERARRAAET). The interval 2011-2057 (KLRRTGGIGLSSSRLTGTPSSKRAGGGGGSDDSSVQDESLDGEDSAN) is globular tailpiece. Phosphoserine is present on residues Ser2021 and Ser2022. The segment covering 2044 to 2057 (SVQDESLDGEDSAN) has biased composition (acidic residues).

Belongs to the TRAFAC class myosin-kinesin ATPase superfamily. Myosin family. Interacts with sau. Interacts with ck and Ubr3. Ubiquitinated. In terms of tissue distribution, in Johnston's organ, expressed in neurons and scolopale cells.

The protein resides in the cell projection. It is found in the cilium. Its subcellular location is the cytoplasm. Nonmuscle myosin appears to be responsible for cellularization. Required for morphogenesis and cytokinesis. Necessary for auditory transduction: plays a role in Johnston's organ organization by acting in scolopidial apical attachment. Interaction with the myosin ck may be important for this function. Localizes to and defines the trailing edge of cells during larval epidermal wound healing. This process is dependent on the phosphatidylinositol 4-phosphate 5-kinase sktl/skittles. This is Myosin heavy chain, non-muscle (zip) from Drosophila melanogaster (Fruit fly).